The following is a 101-amino-acid chain: NADH-quinone oxidoreductase subunit K (101 aa).

The next 3 membrane-spanning stretches (helical) occupy residues 4 to 24, 30 to 50, and 61 to 81; these read LGHY…GIFL, IVLL…FVAF, and VFVF…LAIL.

The protein belongs to the complex I subunit 4L family. NDH-1 is composed of 14 different subunits. Subunits NuoA, H, J, K, L, M, N constitute the membrane sector of the complex.

It is found in the cell inner membrane. It catalyses the reaction a quinone + NADH + 5 H(+)(in) = a quinol + NAD(+) + 4 H(+)(out). Functionally, NDH-1 shuttles electrons from NADH, via FMN and iron-sulfur (Fe-S) centers, to quinones in the respiratory chain. The immediate electron acceptor for the enzyme in this species is believed to be ubiquinone. Couples the redox reaction to proton translocation (for every two electrons transferred, four hydrogen ions are translocated across the cytoplasmic membrane), and thus conserves the redox energy in a proton gradient. This Leptothrix cholodnii (strain ATCC 51168 / LMG 8142 / SP-6) (Leptothrix discophora (strain SP-6)) protein is NADH-quinone oxidoreductase subunit K.